The primary structure comprises 674 residues: Sodium/hydrogen exchanger 1 (674 aa).

The signal sequence occupies residues 1–24 (MKLNKSYILIVVLLLSLFYSSVSS). The segment at 31-65 (KSNNHYNSDNSNNDNKNININNNNDGDGDDDDDNN) is disordered. The span at 37-55 (NSDNSNNDNKNININNNND) shows a compositional bias: low complexity. Helical transmembrane passes span 120-140 (TIIF…YFII), 144-164 (IPFV…GIVF), 175-195 (VVSF…IFET), 213-233 (MFAV…IYIV), 275-297 (LYIL…YSVV), 314-334 (VVAI…SLIL), 336-356 (WINI…FSYM), 359-379 (VLAG…GITL), 401-421 (TAAF…LTAH), 432-452 (WSIL…CFLL), 460-480 (IPWV…FAFS), and 499-519 (NTLL…YPLL). The disordered stretch occupies residues 591-674 (HELDSNPLRF…NKNNDTLPLI (84 aa)). Residues 601-618 (DDDEEDDDDEDLDFDSDL) show a composition bias toward acidic residues. Residues 627 to 657 (DSIHQSDNNNNDNGNNNNNNNNIIINNNSQH) show a composition bias toward low complexity. Residues 662–674 (GSNNKNNDTLPLI) show a composition bias toward polar residues.

Belongs to the monovalent cation:proton antiporter 1 (CPA1) transporter (TC 2.A.36) family.

Its subcellular location is the membrane. LY294002, an inhibitor of the catalytic subunit of PI3-kinase, blocks NHE1-dependent (but not NHE1-independent) increase in intracellular pH in response to cAMP. Regulation of intracellular pH homeostasis in response to cAMP, which is essential for chemotaxis. Necessary for F-actin localization and the kinetics of actin polymerization during chemotaxis and cell polarity but not for directional sensing. The sequence is that of Sodium/hydrogen exchanger 1 (nhe1) from Dictyostelium discoideum (Social amoeba).